The following is a 159-amino-acid chain: uncharacterized protein (159 aa).

This is an uncharacterized protein from Schizosaccharomyces pombe (strain 972 / ATCC 24843) (Fission yeast).